We begin with the raw amino-acid sequence, 396 residues long: S-adenosylmethionine synthase (396 aa).

H15 contributes to the ATP binding site. Residue D17 participates in Mg(2+) binding. E43 serves as a coordination point for K(+). L-methionine-binding residues include E56 and Q99. The tract at residues 99-109 is flexible loop; the sequence is QSSDIAMGVDK. ATP is bound by residues 175-177, 241-242, D250, 256-257, A273, and K277; these read DGK, RF, and RK. D250 is an L-methionine binding site. Residue K281 coordinates L-methionine.

The protein belongs to the AdoMet synthase family. In terms of assembly, homotetramer; dimer of dimers. Requires Mg(2+) as cofactor. K(+) is required as a cofactor.

Its subcellular location is the cytoplasm. It carries out the reaction L-methionine + ATP + H2O = S-adenosyl-L-methionine + phosphate + diphosphate. It participates in amino-acid biosynthesis; S-adenosyl-L-methionine biosynthesis; S-adenosyl-L-methionine from L-methionine: step 1/1. In terms of biological role, catalyzes the formation of S-adenosylmethionine (AdoMet) from methionine and ATP. The overall synthetic reaction is composed of two sequential steps, AdoMet formation and the subsequent tripolyphosphate hydrolysis which occurs prior to release of AdoMet from the enzyme. This is S-adenosylmethionine synthase from Ruminiclostridium cellulolyticum (strain ATCC 35319 / DSM 5812 / JCM 6584 / H10) (Clostridium cellulolyticum).